Here is a 236-residue protein sequence, read N- to C-terminus: Purine nucleoside phosphorylase DeoD-type 2 (236 aa).

Residue His5 coordinates a purine D-ribonucleoside. Phosphate-binding positions include Gly21, Arg25, Arg44, and 88-91 (RVGS). A purine D-ribonucleoside-binding positions include 180–182 (DME) and 204–205 (SD). Asp205 serves as the catalytic Proton donor.

It belongs to the PNP/UDP phosphorylase family. Homohexamer; trimer of homodimers.

It carries out the reaction a purine D-ribonucleoside + phosphate = a purine nucleobase + alpha-D-ribose 1-phosphate. The catalysed reaction is a purine 2'-deoxy-D-ribonucleoside + phosphate = a purine nucleobase + 2-deoxy-alpha-D-ribose 1-phosphate. Its function is as follows. Catalyzes the reversible phosphorolytic breakdown of the N-glycosidic bond in the beta-(deoxy)ribonucleoside molecules, with the formation of the corresponding free purine bases and pentose-1-phosphate. The sequence is that of Purine nucleoside phosphorylase DeoD-type 2 from Aliivibrio fischeri (strain ATCC 700601 / ES114) (Vibrio fischeri).